The primary structure comprises 276 residues: 4-hydroxy-tetrahydrodipicolinate reductase (276 aa).

Residues 18-23 (GASGRM) and D44 contribute to the NAD(+) site. Residue R45 participates in NADP(+) binding. Residues 107–109 (GTT) and 131–134 (APNM) contribute to the NAD(+) site. H164 serves as the catalytic Proton donor/acceptor. (S)-2,3,4,5-tetrahydrodipicolinate is bound at residue H165. The active-site Proton donor is K168. (S)-2,3,4,5-tetrahydrodipicolinate is bound at residue 174 to 175 (GT).

Belongs to the DapB family.

The protein resides in the cytoplasm. It carries out the reaction (S)-2,3,4,5-tetrahydrodipicolinate + NAD(+) + H2O = (2S,4S)-4-hydroxy-2,3,4,5-tetrahydrodipicolinate + NADH + H(+). The enzyme catalyses (S)-2,3,4,5-tetrahydrodipicolinate + NADP(+) + H2O = (2S,4S)-4-hydroxy-2,3,4,5-tetrahydrodipicolinate + NADPH + H(+). It participates in amino-acid biosynthesis; L-lysine biosynthesis via DAP pathway; (S)-tetrahydrodipicolinate from L-aspartate: step 4/4. In terms of biological role, catalyzes the conversion of 4-hydroxy-tetrahydrodipicolinate (HTPA) to tetrahydrodipicolinate. The chain is 4-hydroxy-tetrahydrodipicolinate reductase from Aromatoleum aromaticum (strain DSM 19018 / LMG 30748 / EbN1) (Azoarcus sp. (strain EbN1)).